Here is a 139-residue protein sequence, read N- to C-terminus: Protein Turandot B (139 aa).

Positions 1–21 (MNFKTALICFALLLIGTLCSA) are cleaved as a signal peptide.

The protein belongs to the Turandot family.

Its subcellular location is the secreted. Its function is as follows. A humoral factor that may play a role in stress tolerance. This Drosophila simulans (Fruit fly) protein is Protein Turandot B.